A 317-amino-acid chain; its full sequence is Transaldolase (317 aa).

Lys132 serves as the catalytic Schiff-base intermediate with substrate.

This sequence belongs to the transaldolase family. Type 1 subfamily. Homodimer.

It is found in the cytoplasm. It carries out the reaction D-sedoheptulose 7-phosphate + D-glyceraldehyde 3-phosphate = D-erythrose 4-phosphate + beta-D-fructose 6-phosphate. Its pathway is carbohydrate degradation; pentose phosphate pathway; D-glyceraldehyde 3-phosphate and beta-D-fructose 6-phosphate from D-ribose 5-phosphate and D-xylulose 5-phosphate (non-oxidative stage): step 2/3. In terms of biological role, transaldolase is important for the balance of metabolites in the pentose-phosphate pathway. This chain is Transaldolase, found in Shewanella amazonensis (strain ATCC BAA-1098 / SB2B).